The following is a 277-amino-acid chain: Small ribosomal subunit protein uS2 (277 aa).

The tract at residues Met-1–Glu-78 is disordered.

Belongs to the universal ribosomal protein uS2 family.

This Natronomonas pharaonis (strain ATCC 35678 / DSM 2160 / CIP 103997 / JCM 8858 / NBRC 14720 / NCIMB 2260 / Gabara) (Halobacterium pharaonis) protein is Small ribosomal subunit protein uS2.